The chain runs to 138 residues: Large ribosomal subunit protein uL16c (138 aa).

This sequence belongs to the universal ribosomal protein uL16 family. In terms of assembly, part of the 50S ribosomal subunit.

It is found in the plastid. Its subcellular location is the chloroplast. The protein is Large ribosomal subunit protein uL16c of Phaeodactylum tricornutum (strain CCAP 1055/1).